Reading from the N-terminus, the 400-residue chain is Acetate kinase (400 aa).

Position 10 (asparagine 10) interacts with Mg(2+). Lysine 17 is a binding site for ATP. Residue arginine 89 coordinates substrate. Aspartate 148 (proton donor/acceptor) is an active-site residue. Residues 208–212, 283–285, and 331–335 contribute to the ATP site; these read HLGNG, DCR, and GIGEN. Position 385 (glutamate 385) interacts with Mg(2+).

It belongs to the acetokinase family. In terms of assembly, homodimer. It depends on Mg(2+) as a cofactor. The cofactor is Mn(2+).

It is found in the cytoplasm. It catalyses the reaction acetate + ATP = acetyl phosphate + ADP. It functions in the pathway metabolic intermediate biosynthesis; acetyl-CoA biosynthesis; acetyl-CoA from acetate: step 1/2. Catalyzes the formation of acetyl phosphate from acetate and ATP. Can also catalyze the reverse reaction. The polypeptide is Acetate kinase (Haemophilus ducreyi (strain 35000HP / ATCC 700724)).